The following is a 346-amino-acid chain: LRP2-binding protein (346 aa).

Residues 58–91 form a TPR repeat; it reads AMAYFLRGQLYFEEGWYEEALAQFEEIQEKDHQA. Sel1-like repeat units lie at residues 92–124, 132–167, 172–205, 206–241, 242–276, and 296–331; these read IYQL…DSSC, FAAA…DNGN, VKAQ…GNGS, LESQ…ERGN, VYAQ…EVHD, and AMAA…RLNP.

In terms of assembly, interacts with LRP2.

The protein resides in the cytoplasm. In terms of biological role, may act as an adapter that regulates LRP2 function. The sequence is that of LRP2-binding protein (Lrp2bp) from Mus musculus (Mouse).